The primary structure comprises 255 residues: Triosephosphate isomerase (255 aa).

Substrate is bound at residue 9–11 (NWK). The active-site Electrophile is His96. Glu170 (proton acceptor) is an active-site residue. Substrate is bound by residues Gly176, Ser216, and 237-238 (GG).

Belongs to the triosephosphate isomerase family. As to quaternary structure, homodimer.

The protein resides in the cytoplasm. It carries out the reaction D-glyceraldehyde 3-phosphate = dihydroxyacetone phosphate. Its pathway is carbohydrate biosynthesis; gluconeogenesis. It functions in the pathway carbohydrate degradation; glycolysis; D-glyceraldehyde 3-phosphate from glycerone phosphate: step 1/1. Involved in the gluconeogenesis. Catalyzes stereospecifically the conversion of dihydroxyacetone phosphate (DHAP) to D-glyceraldehyde-3-phosphate (G3P). This is Triosephosphate isomerase from Magnetococcus marinus (strain ATCC BAA-1437 / JCM 17883 / MC-1).